Reading from the N-terminus, the 28-residue chain is Kappa-stichotoxin-Shd1a/kappa-stichotoxin-Shd1b (28 aa).

The residue at position 6 (proline 6) is a 4-hydroxyproline; in form SHTX-1 (Shd1a). 2 disulfide bridges follow: cysteine 7-cysteine 19 and cysteine 10-cysteine 25.

Belongs to the sea anemone BBH family. Post-translationally, occurs in 2 forms which differ in the post-translational modification of Pro-6. In form SHTX-1 (Shd1a) Pro-6 is a hydroxyproline while in form SHTX-2 (Shd1b) Pro-6 is unmodified.

It is found in the secreted. The protein resides in the nematocyst. Functionally, kappa-stichotoxin-Shd1a: inhibits voltage-gated potassium channels (Kv). Its function is as follows. Kappa-stichotoxin-Shd1b: inhibits voltage-gated potassium channels (Kv). This toxin inhibits the binding of 125I-alpha-dendrotoxin to synaptosomal membranes (IC(50)=270 nM). The polypeptide is Kappa-stichotoxin-Shd1a/kappa-stichotoxin-Shd1b (Stichodactyla haddoni (Saddle carpet anemone)).